Reading from the N-terminus, the 453-residue chain is G-protein coupled receptor 39 (453 aa).

The Extracellular portion of the chain corresponds to 1–34; it reads MASPSLPGSDCSQIIDHSHVPEFEVATWIKITLI. 2 disulfide bridges follow: Cys-11-Cys-191 and Cys-108-Cys-210. Residues His-17 and His-19 each contribute to the Zn(2+) site. Residues 35–55 form a helical membrane-spanning segment; it reads LVYLIIFVMGLLGNSATIRVT. The Cytoplasmic portion of the chain corresponds to 56 to 69; the sequence is QVLQKKGYLQKEVT. The chain crosses the membrane as a helical span at residues 70–89; sequence DHMVSLACSDILVFLIGMPM. Over 90-109 the chain is Extracellular; the sequence is EFYSIIWNPLTTSSYTLSCK. The chain crosses the membrane as a helical span at residues 110–131; that stretch reads LHTFLFEACSYATLLHVLTLSF. The Cytoplasmic portion of the chain corresponds to 132–151; that stretch reads ERYIAICHPFRYKAVSGPCQ. Residues 152–172 traverse the membrane as a helical segment; the sequence is VKLLIGFVWVTSALVALPLLF. Residues 173–217 are Extracellular-facing; sequence AMGTEYPLVNVPSHRGLTCNRSSTRHHEQPETSNMSICTNLSSRW. Residues Asn-192, Asn-206, and Asn-212 are each glycosylated (N-linked (GlcNAc...) asparagine). Residues 218–242 traverse the membrane as a helical segment; sequence TVFQSSIFGAFVVYLVVLLSVAFMC. Residues 243 to 283 are Cytoplasmic-facing; the sequence is WNMMQVLMKSQKGSLAGGTRPPQLRKSESEESRTARRQTII. Residues 255-274 are disordered; sequence GSLAGGTRPPQLRKSESEES. Residues 284-305 form a helical membrane-spanning segment; sequence FLRLIVVTLAVCWMPNQIRRIM. Over 306 to 323 the chain is Extracellular; the sequence is AAAKPKHDWTRSYFRAYM. Residues 324–344 traverse the membrane as a helical segment; it reads ILLPFSETFFYLSSVINPLLY. Topologically, residues 345–453 are cytoplasmic; the sequence is TVSSQQFRRV…AENGFQEHEV (109 aa). Position 396 is a phosphoserine (Ser-396). The tract at residues 415–453 is disordered; the sequence is SEAEPQSKSQSLSLESLEPNSGAKPANSAAENGFQEHEV. Over residues 418 to 435 the composition is skewed to low complexity; it reads EPQSKSQSLSLESLEPNS.

This sequence belongs to the G-protein coupled receptor 1 family. Interacts with HTR1A. Interacts with GALR1. As to expression, expressed in many tissues, including the stomach, intestine and hypothalamus.

The protein localises to the cell membrane. Its function is as follows. Zinc-sensing receptor that can sense changes in extracellular Zn(2+), mediate Zn(2+) signal transmission, and participates in the regulation of numerous physiological processes including glucose homeostasis regulation, gastrointestinal mobility, hormone secretion and cell death. Activation by Zn(2+) in keratinocytes increases the intracellular concentration of Ca(2+) and activates the ERK/MAPK and PI3K/AKT signaling pathways leading to epithelial repair. Plays an essential role in normal wound healing by inducing the production of cytokines including the major inflammatory cytokine IL6 via the PKC/MAPK/CEBPB pathway. Regulates adipose tissue metabolism, especially lipolysis, and regulates the function of lipases, such as hormone-sensitive lipase and adipose triglyceride lipase. Plays a role in the inhibition of cell death and protects against oxidative, endoplasmic reticulum and mitochondrial stress by inducing secretion of the cytoprotective pigment epithelium-derived growth factor (PEDF) and probably other protective transcripts in a GNA13/RHOA/SRE-dependent manner. Forms dynamic heteroreceptor complexes with HTR1A and GALR1 depending on cell type or specific physiological states, resulting in signaling diversity: HTR1A-GPR39 shows additive increase in signaling along the serum response element (SRE) and NF-kappa-B pathways while GALR1 acts as an antagonist blocking SRE. The chain is G-protein coupled receptor 39 (GPR39) from Homo sapiens (Human).